The chain runs to 203 residues: 2-hydroxychromene-2-carboxylate isomerase (203 aa).

The Nucleophile role is filled by serine 11. Serine 11 is a binding site for glutathione. Residues lysine 43, 53 to 54 (NR), and tyrosine 84 each bind substrate. Glutathione-binding positions include valine 168 and 179–182 (WGND).

The protein belongs to the GST superfamily. NadH family. The cofactor is glutathione.

It carries out the reaction 2-hydroxychromene-2-carboxylate = (3E)-4-(2-hydroxyphenyl)-2-oxobut-3-enoate. The protein operates within aromatic compound metabolism; naphthalene degradation. Involved in the naphthalene catabolic pathway. Catalyzes the reversible glutathione-dependent isomerization of 2-hydroxychromene-2-carboxylate (HCCA) to trans-O-hydroxybenzylidenepyruvate (THBPA). This chain is 2-hydroxychromene-2-carboxylate isomerase (nahD), found in Pseudomonas putida (Arthrobacter siderocapsulatus).